Reading from the N-terminus, the 714-residue chain is Protein spire homolog 2 (714 aa).

One can recognise a KIND domain in the interval 22 to 203 (LSLEEVLKAY…RALFVETLEL (182 aa)). Residues 136–162 (DSEDSGCGAADEGYGGPEEEEEAEGVP) form a disordered region. WH2 domains follow at residues 248–262 (QLMRELRRGVKLKKV), 278–296 (PFEMLMQDIRARNYKLRKV), and 342–359 (LHEKILEEIKQERRLRPV). S371, S440, S442, and S476 each carry phosphoserine. A disordered region spans residues 453-516 (VASGLQSATH…SSGDRPEASM (64 aa)). The segment covering 486 to 496 (DQGTCPASVSD) has biased composition (polar residues). Residues 534 to 554 (LALTVEEVMDVRRVLVKAEME) form a spir-box region.

Belongs to the spire family.

It localises to the cytoplasm. It is found in the cytoskeleton. Its subcellular location is the cytosol. The protein localises to the cell membrane. The protein resides in the cytoplasmic vesicle membrane. Acts as an actin nucleation factor, remains associated with the slow-growing pointed end of the new filament. Involved in intracellular vesicle transport along actin fibers, providing a novel link between actin cytoskeleton dynamics and intracellular transport. Required for asymmetric spindle positioning and asymmetric cell division during meiosis. Required for normal formation of the cleavage furrow and for polar body extrusion during female germ cell meiosis. Also acts in the nucleus: together with SPIRE1 and SPIRE2, promotes assembly of nuclear actin filaments in response to DNA damage in order to facilitate movement of chromatin and repair factors after DNA damage. This is Protein spire homolog 2 (SPIRE2) from Homo sapiens (Human).